The sequence spans 150 residues: UPF0178 protein PBPRA1738 (150 aa).

This sequence belongs to the UPF0178 family.

This is UPF0178 protein PBPRA1738 from Photobacterium profundum (strain SS9).